Consider the following 351-residue polypeptide: Lipoyl synthase (351 aa).

Residues 1-10 (MNDSGNSSKV) are compositionally biased toward polar residues. Residues 1–27 (MNDSGNSSKVNVRPPSAGLGAPSPGKR) form a disordered region. The span at 14 to 24 (PPSAGLGAPSP) shows a compositional bias: low complexity. [4Fe-4S] cluster-binding residues include C74, C79, C85, C100, C104, C107, and S311. The Radical SAM core domain occupies 86–300 (WEDREATFLI…KEQAKEIGFS (215 aa)).

The protein belongs to the radical SAM superfamily. Lipoyl synthase family. The cofactor is [4Fe-4S] cluster.

The protein resides in the cytoplasm. The catalysed reaction is [[Fe-S] cluster scaffold protein carrying a second [4Fe-4S](2+) cluster] + N(6)-octanoyl-L-lysyl-[protein] + 2 oxidized [2Fe-2S]-[ferredoxin] + 2 S-adenosyl-L-methionine + 4 H(+) = [[Fe-S] cluster scaffold protein] + N(6)-[(R)-dihydrolipoyl]-L-lysyl-[protein] + 4 Fe(3+) + 2 hydrogen sulfide + 2 5'-deoxyadenosine + 2 L-methionine + 2 reduced [2Fe-2S]-[ferredoxin]. Its pathway is protein modification; protein lipoylation via endogenous pathway; protein N(6)-(lipoyl)lysine from octanoyl-[acyl-carrier-protein]: step 2/2. In terms of biological role, catalyzes the radical-mediated insertion of two sulfur atoms into the C-6 and C-8 positions of the octanoyl moiety bound to the lipoyl domains of lipoate-dependent enzymes, thereby converting the octanoylated domains into lipoylated derivatives. This Tropheryma whipplei (strain TW08/27) (Whipple's bacillus) protein is Lipoyl synthase.